Reading from the N-terminus, the 204-residue chain is tRNA (guanine-N(7)-)-methyltransferase (204 aa).

S-adenosyl-L-methionine contacts are provided by Glu36, Glu61, and Asp111. The active site involves Asp111. Substrate is bound by residues Lys115, Asp147, and Thr177–Glu180.

The protein belongs to the class I-like SAM-binding methyltransferase superfamily. TrmB family.

It catalyses the reaction guanosine(46) in tRNA + S-adenosyl-L-methionine = N(7)-methylguanosine(46) in tRNA + S-adenosyl-L-homocysteine. It functions in the pathway tRNA modification; N(7)-methylguanine-tRNA biosynthesis. Its function is as follows. Catalyzes the formation of N(7)-methylguanine at position 46 (m7G46) in tRNA. This chain is tRNA (guanine-N(7)-)-methyltransferase, found in Chlorobium phaeobacteroides (strain DSM 266 / SMG 266 / 2430).